A 179-amino-acid chain; its full sequence is ATP synthase subunit delta (179 aa).

It belongs to the ATPase delta chain family. F-type ATPases have 2 components, F(1) - the catalytic core - and F(0) - the membrane proton channel. F(1) has five subunits: alpha(3), beta(3), gamma(1), delta(1), epsilon(1). F(0) has three main subunits: a(1), b(2) and c(10-14). The alpha and beta chains form an alternating ring which encloses part of the gamma chain. F(1) is attached to F(0) by a central stalk formed by the gamma and epsilon chains, while a peripheral stalk is formed by the delta and b chains.

It is found in the cell inner membrane. Functionally, f(1)F(0) ATP synthase produces ATP from ADP in the presence of a proton or sodium gradient. F-type ATPases consist of two structural domains, F(1) containing the extramembraneous catalytic core and F(0) containing the membrane proton channel, linked together by a central stalk and a peripheral stalk. During catalysis, ATP synthesis in the catalytic domain of F(1) is coupled via a rotary mechanism of the central stalk subunits to proton translocation. Its function is as follows. This protein is part of the stalk that links CF(0) to CF(1). It either transmits conformational changes from CF(0) to CF(1) or is implicated in proton conduction. This Koribacter versatilis (strain Ellin345) protein is ATP synthase subunit delta.